Consider the following 1067-residue polypeptide: Lon protease homolog, mitochondrial (1067 aa).

A mitochondrion-targeting transit peptide spans 1-36 (MITRLSGACLRRSGAKRNWPREHLVHRSLLASFSTT). Basic and acidic residues predominate over residues 55-82 (KSKEPKDNKPLDNKNDPKKTHNEDESHT). Disordered regions lie at residues 55–142 (KSKE…MPLN) and 262–314 (IPPK…ESTP). Residues 128–139 (FELGGEENEDEM) are compositionally biased toward acidic residues. In terms of domain architecture, Lon N-terminal spans 162–425 (LLALPIARRP…KALYVLKKEL (264 aa)). Residues 293 to 311 (VKSDLKQDNGKEEPEKEVE) are compositionally biased toward basic and acidic residues. 578 to 585 (GPPGVGKT) contributes to the ATP binding site. The interval 791–820 (NSKEKSTGKSGKKTSPQSSEDAANKEASSV) is disordered. In terms of domain architecture, Lon proteolytic spans 854–1040 (TTPPGVVMGL…DDVFKRVFSN (187 aa)). Active-site residues include S946 and K989.

Belongs to the peptidase S16 family. In terms of assembly, homohexamer or homoheptamer. Organized in a ring with a central cavity.

It is found in the mitochondrion matrix. It carries out the reaction Hydrolysis of proteins in presence of ATP.. ATP-dependent serine protease that mediates the selective degradation of misfolded, unassembled or oxidatively damaged polypeptides as well as certain short-lived regulatory proteins in the mitochondrial matrix. May also have a chaperone function in the assembly of inner membrane protein complexes. Participates in the regulation of mitochondrial gene expression and in the maintenance of the integrity of the mitochondrial genome. Binds to mitochondrial DNA in a site-specific manner. The protein is Lon protease homolog, mitochondrial (pim1) of Schizosaccharomyces pombe (strain 972 / ATCC 24843) (Fission yeast).